The primary structure comprises 265 residues: NAD kinase (265 aa).

Catalysis depends on Asp-45, which acts as the Proton acceptor. NAD(+)-binding positions include 45-46 (DG), 122-123 (NE), Arg-148, Asp-150, 161-166 (TAYNKS), Ala-185, and Gln-223.

It belongs to the NAD kinase family. Requires a divalent metal cation as cofactor.

It localises to the cytoplasm. It carries out the reaction NAD(+) + ATP = ADP + NADP(+) + H(+). In terms of biological role, involved in the regulation of the intracellular balance of NAD and NADP, and is a key enzyme in the biosynthesis of NADP. Catalyzes specifically the phosphorylation on 2'-hydroxyl of the adenosine moiety of NAD to yield NADP. The chain is NAD kinase from Enterococcus faecalis (strain ATCC 700802 / V583).